Reading from the N-terminus, the 961-residue chain is Probable exosome complex exonuclease RRP44 (961 aa).

In terms of domain architecture, PINc spans 73-188 (HALIVDSTSL…LVFDEDSKKR (116 aa)). One can recognise a CSD1 domain in the interval 232 to 338 (IFDEYLSHDR…DEENDDENDE (107 aa)). Positions 322 to 346 (ADDMGNEDEENDDENDEPKAKKSKK) are disordered. Positions 325 to 337 (MGNEDEENDDEND) are enriched in acidic residues. The 67-residue stretch at 381–447 (LFCPAERLIP…ENEVLLLEHD (67 aa)) folds into the CSD2 domain. Positions 479 to 809 (RVDLRDLTIC…IVHRLLAAAI (331 aa)) constitute an RNB domain.

The protein belongs to the RNR ribonuclease family. Component of the RNA exosome complex. Ubiquitously expressed.

The protein resides in the nucleus. The protein localises to the nucleoplasm. Putative catalytic component of the RNA exosome complex which has 3'-&gt;5' exoribonuclease activity and participates in a multitude of cellular RNA processing and degradation events. Has both 3'-5' exonuclease and endonuclease activities. Involved in regulation of antisense ribosomal siRNA production. In Caenorhabditis elegans, this protein is Probable exosome complex exonuclease RRP44 (dis-3).